A 308-amino-acid chain; its full sequence is Ribosomal RNA small subunit methyltransferase H (308 aa).

Residues 32-34, Asp52, Phe79, Asp100, and Gln107 contribute to the S-adenosyl-L-methionine site; that span reads AGH.

It belongs to the methyltransferase superfamily. RsmH family.

It is found in the cytoplasm. It catalyses the reaction cytidine(1402) in 16S rRNA + S-adenosyl-L-methionine = N(4)-methylcytidine(1402) in 16S rRNA + S-adenosyl-L-homocysteine + H(+). Functionally, specifically methylates the N4 position of cytidine in position 1402 (C1402) of 16S rRNA. This chain is Ribosomal RNA small subunit methyltransferase H, found in Mycoplasma mycoides subsp. mycoides SC (strain CCUG 32753 / NCTC 10114 / PG1).